Reading from the N-terminus, the 499-residue chain is Uridine-cytidine kinase A (499 aa).

The interval 1-44 is disordered; it reads MSDNSTTKVTTNDSPSLTTTTSTTTAPTTTTTTTTTPTHNHDTT. Residues 10–38 are compositionally biased toward low complexity; sequence TTNDSPSLTTTTSTTTAPTTTTTTTTTPT. 78–85 is an ATP binding site; the sequence is GGSASGKT.

The protein belongs to the uridine kinase family.

It carries out the reaction uridine + ATP = UMP + ADP + H(+). It catalyses the reaction cytidine + ATP = CMP + ADP + H(+). It participates in pyrimidine metabolism; CTP biosynthesis via salvage pathway; CTP from cytidine: step 1/3. Its pathway is pyrimidine metabolism; UMP biosynthesis via salvage pathway; UMP from uridine: step 1/1. Functionally, catalyzes the conversion of uridine into uridine monophosphate and cytidine into cytidine monophosphate in the pyrimidine salvage pathway. In Dictyostelium discoideum (Social amoeba), this protein is Uridine-cytidine kinase A (udkA).